Reading from the N-terminus, the 297-residue chain is MKKGKMIIISGPSGVGKGSVNGELLQNPDLRLKYSVSMTTRKPRNGEINGVNYFFVSNEEFAKAIVNDELIEYAHFVGNSYGTPRKYVEQELKKGNNVILEIEVDGATQVLNKEANVLSIFLMPPNLTELANRIRGRQTEDEEKIKARLDKALLEIPLKHNYQYVIENDNVANAVAKITDVLHLEGLTDIKTPTVYERLEQIVEQIVKEKYMYFVNNWETNVKLLAKNEEEKNKAKNFDAETYLIKLLTKKVYHKVLGHGDFSKLLDKDFVDFKIQKLMFKINFFSVEQKHYNNDEF.

Residues Gly4–His183 enclose the Guanylate kinase-like domain. Gly11 to Gly18 is a binding site for ATP. Residues Glu204 to Phe297 form a unknown region.

The protein belongs to the guanylate kinase family.

The protein localises to the cytoplasm. It carries out the reaction GMP + ATP = GDP + ADP. Functionally, essential for recycling GMP and indirectly, cGMP. This Mycoplasma capricolum subsp. capricolum (strain California kid / ATCC 27343 / NCTC 10154) protein is Guanylate kinase (gmk).